We begin with the raw amino-acid sequence, 183 residues long: Glutathione-regulated potassium-efflux system ancillary protein KefG (183 aa).

This sequence belongs to the NAD(P)H dehydrogenase (quinone) family. KefG subfamily. Interacts with KefB.

The protein localises to the cell inner membrane. It carries out the reaction a quinone + NADH + H(+) = a quinol + NAD(+). The catalysed reaction is a quinone + NADPH + H(+) = a quinol + NADP(+). Its function is as follows. Regulatory subunit of a potassium efflux system that confers protection against electrophiles. Required for full activity of KefB. In Yersinia pestis bv. Antiqua (strain Angola), this protein is Glutathione-regulated potassium-efflux system ancillary protein KefG.